The following is a 343-amino-acid chain: NADH-cytochrome b5 reductase 2 (343 aa).

A helical membrane pass occupies residues 41–61 (ILLGAAAVGLAGAGAYFFSGA). In terms of domain architecture, FAD-binding FR-type spans 92 to 197 (QGWLSLKLEE…KGPLPKYPWE (106 aa)). 200–235 (KHKHIALVAGGTGITPMYQLIRAIFNNPDDKTKVTL) contributes to the FAD binding site.

This sequence belongs to the flavoprotein pyridine nucleotide cytochrome reductase family. Requires FAD as cofactor.

The protein localises to the mitochondrion outer membrane. The catalysed reaction is 2 Fe(III)-[cytochrome b5] + NADH = 2 Fe(II)-[cytochrome b5] + NAD(+) + H(+). Functionally, may mediate the reduction of outer membrane cytochrome b5. This is NADH-cytochrome b5 reductase 2 (mcr-1) from Neurospora crassa (strain ATCC 24698 / 74-OR23-1A / CBS 708.71 / DSM 1257 / FGSC 987).